Consider the following 170-residue polypeptide: FMRFamide-like neuropeptides 6 (170 aa).

An N-terminal signal peptide occupies residues 1 to 19; that stretch reads MNSRGLILTLGVVIAVAFA. Gln-20 is modified (pyrrolidone carboxylic acid). Phenylalanine amide is present on Phe-39. Positions 42–51 are excised as a propeptide; that stretch reads SDGGNPMEME. Residue Phe-60 is modified to Phenylalanine amide. Positions 63–81 are excised as a propeptide; it reads RSSGGDEQELVGGDDIDME. Phe-90 carries the phenylalanine amide modification. The propeptide occupies 93–104; sequence RSGPQEDDMPME. Position 113 is a phenylalanine amide (Phe-113). Residues 116 to 136 constitute a propeptide that is removed on maturation; sequence RSSDMEVIGNEGVDGDAHDLF. A Phenylalanine amide modification is found at Phe-145. Residues 148-159 constitute a propeptide that is removed on maturation; the sequence is RSMGEEEDHDMM. A disordered region spans residues 150-170; it reads MGEEEDHDMMKRKSAYMRFGR. Basic residues predominate over residues 159-170; sequence MKRKSAYMRFGR. Position 168 is a phenylalanine amide (Phe-168).

The protein belongs to the FARP (FMRFamide related peptide) family. As to expression, each flp gene is expressed in a distinct set of neurons. Flp-6 is expressed in the ASE sensory neurons, AFD, ASG, PVT and I1 neurons.

The protein localises to the secreted. Functionally, FMRFamides and FMRFamide-like peptides are neuropeptides. KSAYMRF-amide has an excitatory effect on dissected pharyngeal myogenic muscle system. The sequence is that of FMRFamide-like neuropeptides 6 from Caenorhabditis elegans.